The chain runs to 1518 residues: WD repeat-containing protein 62 (1518 aa).

Position 2 is an N-acetylalanine (Ala2). Phosphoserine is present on Ser33. Phosphothreonine is present on Thr46. At Ser49 the chain carries Phosphoserine. Thr50 carries the post-translational modification Phosphothreonine. Ser52 is modified (phosphoserine). WD repeat units follow at residues 109 to 150 (TARK…QVAE), 153 to 194 (GHKY…VVAS), 196 to 234 (KVSCRVIALSFSEDSSYFVTVGNRHVRFWFLEVSTETKV), 291 to 330 (INLKVSLSSCLCVSQELIFCGCTDGIVRIFQAHSLHYLAN), 357 to 396 (AVYPDTVALTFDPIHQWLSCVYKDHSIYIWDVKDINRVGK), 402 to 450 (FHSS…DSHW), 490 to 529 (DVKAGVRVMQVSPDGQHLASGDRSGNLRIHELHFMDELVK), 532 to 574 (AHDA…NLEQ), 578 to 618 (DHSS…DGLH), 626 to 665 (AEKTTLYDMDIDITQKYVAVACQDRNVRVYNTVNGKQKKC), 671 to 713 (GDEG…KMFG), and 714 to 752 (HSEIITSMKFTYDCHHLITVSGDSCVFIWHLGPEITNCM). At Ser501 the chain carries Phosphoserine. Over residues 762–772 (RQQQQHTNDKK) the composition is skewed to basic and acidic residues. Disordered regions lie at residues 762–824 (RQQQ…DPDP) and 908–935 (ASLLSESESPQEAGRGHPSFLPQQKESS). Polar residues predominate over residues 781–790 (TYVSTPSEIH). Positions 797-809 (QTEDDLEEECEPE) are enriched in acidic residues. Residues 803-846 (EEECEPEEMLKTPSKDSLDPDPRCLLTNGKLPLWAKRLLGDDDV) form a WD 13 repeat. A compositionally biased stretch (basic and acidic residues) spans 810-824 (EMLKTPSKDSLDPDP). Positions 908 to 920 (ASLLSESESPQEA) are enriched in low complexity. Ser944 is subject to Phosphoserine. The interval 962–1055 (EVEAGPGDQQ…PSSSLPQTPE (94 aa)) is disordered. 2 stretches are compositionally biased toward polar residues: residues 971 to 981 (QGDSYLRVSSD) and 1045 to 1054 (VPSSSLPQTP). Thr1053 carries the phosphothreonine modification. A phosphoserine mark is found at Ser1070, Ser1093, Ser1101, Ser1123, Ser1144, Ser1228, Ser1248, and Ser1249. One copy of the WD 14 repeat lies at 1132 to 1173 (GGSQPRAGTGYASPDRTHVLAAGKAEETLEAWRPPPPCLTSL). The stretch at 1255-1293 (SLGQELQAITTATTPSLDSEGQEPALRSWGNHEARANLR) is one WD 15 repeat. A Phosphothreonine modification is found at Thr1268. The segment at 1339–1377 (FRPSLPAPESPGLPAHPSNPQLPEARPGIPGGTASLLEP) is disordered.

Can form homodimers (via C-terminus). Interacts (via C-terminus) with MAPKBP1 (via C-terminus). Interacts with CDK5RAP2, CEP152, CEP63 and KIAA0753. CEP63, CDK5RAP2, CEP152, WDR62 are proposed to form a stepwise assembled complex at the centrosome forming a ring near parental centrioles. Present in fetal brain, enriched within the ventricular and subventricular zone (at protein level). In the embryonic brain it is expressed in mitotic neural precursor cells.

It localises to the nucleus. The protein localises to the cytoplasm. The protein resides in the cytoskeleton. Its subcellular location is the spindle pole. It is found in the microtubule organizing center. It localises to the centrosome. The protein localises to the centriole. In terms of biological role, required for cerebral cortical development. Plays a role in neuronal proliferation and migration. Plays a role in mother-centriole-dependent centriole duplication; the function also seems to involve CEP152, CDK5RAP2 and CEP63 through a stepwise assembled complex at the centrosome that recruits CDK2 required for centriole duplication. In Homo sapiens (Human), this protein is WD repeat-containing protein 62 (WDR62).